The sequence spans 295 residues: Probable protein phosphatase 2C 54 (295 aa).

Residues 78-289 form the PPM-type phosphatase domain; that stretch reads GHGVVSVMGR…ENINVIVIDL (212 aa). Residues D112, G113, D228, and E280 each coordinate Mn(2+).

This sequence belongs to the PP2C family. Mg(2+) serves as cofactor. Requires Mn(2+) as cofactor.

The enzyme catalyses O-phospho-L-seryl-[protein] + H2O = L-seryl-[protein] + phosphate. It carries out the reaction O-phospho-L-threonyl-[protein] + H2O = L-threonyl-[protein] + phosphate. This chain is Probable protein phosphatase 2C 54, found in Arabidopsis thaliana (Mouse-ear cress).